We begin with the raw amino-acid sequence, 64 residues long: Large ribosomal subunit protein bL35 (64 aa).

Composition is skewed to basic residues over residues 1 to 15 (MPKQ…KRFR) and 23 to 43 (VRQK…RTRR). The segment at 1 to 64 (MPKQKSHSGA…AGRIKRLLAR (64 aa)) is disordered.

It belongs to the bacterial ribosomal protein bL35 family.

The polypeptide is Large ribosomal subunit protein bL35 (Frankia alni (strain DSM 45986 / CECT 9034 / ACN14a)).